We begin with the raw amino-acid sequence, 293 residues long: ATP phosphoribosyltransferase (293 aa).

The protein belongs to the ATP phosphoribosyltransferase family. Long subfamily. Mg(2+) is required as a cofactor.

The protein localises to the cytoplasm. The catalysed reaction is 1-(5-phospho-beta-D-ribosyl)-ATP + diphosphate = 5-phospho-alpha-D-ribose 1-diphosphate + ATP. It functions in the pathway amino-acid biosynthesis; L-histidine biosynthesis; L-histidine from 5-phospho-alpha-D-ribose 1-diphosphate: step 1/9. Its activity is regulated as follows. Feedback inhibited by histidine. Its function is as follows. Catalyzes the condensation of ATP and 5-phosphoribose 1-diphosphate to form N'-(5'-phosphoribosyl)-ATP (PR-ATP). Has a crucial role in the pathway because the rate of histidine biosynthesis seems to be controlled primarily by regulation of HisG enzymatic activity. This chain is ATP phosphoribosyltransferase, found in Solidesulfovibrio magneticus (strain ATCC 700980 / DSM 13731 / RS-1) (Desulfovibrio magneticus).